Reading from the N-terminus, the 495-residue chain is Phenylalanine--tRNA ligase alpha subunit (495 aa).

L-phenylalanine is bound by residues Thr-338, Gln-377 to Glu-379, and Tyr-417. Glu-419 is a binding site for Mg(2+). Residue Phe-442 participates in L-phenylalanine binding.

Belongs to the class-II aminoacyl-tRNA synthetase family. Phe-tRNA synthetase alpha subunit type 2 subfamily. As to quaternary structure, tetramer of two alpha and two beta subunits. Mg(2+) is required as a cofactor.

The protein localises to the cytoplasm. It carries out the reaction tRNA(Phe) + L-phenylalanine + ATP = L-phenylalanyl-tRNA(Phe) + AMP + diphosphate + H(+). In Methanosarcina mazei (strain ATCC BAA-159 / DSM 3647 / Goe1 / Go1 / JCM 11833 / OCM 88) (Methanosarcina frisia), this protein is Phenylalanine--tRNA ligase alpha subunit.